Here is a 211-residue protein sequence, read N- to C-terminus: Agamous-like MADS-box protein AGL12 (211 aa).

The MADS-box domain maps to 3–57 (RGKIQLKRIENPVHRQVTFCKRRTGLLKKAKELSVLCDAEIGVVIFSPQGKLFEL). A K-box domain is found at 95–185 (NLDPKDEINV…LEKIEENNNS (91 aa)).

In terms of tissue distribution, preferentially expressed in roots. In root meristem, expressed in external cells of columella, lateral root cap and atrichoblasts. In mature root, expressed in the central cylinder. Expressed in leaf vasculature, young floral meristems and nectaries.

It is found in the nucleus. In terms of biological role, probable transcription activator that regulates root development by controlling cell proliferation in root meristem. May mediate responses to auxin in the root. May act as promoter of the flowering transition through up-regulation of SOC, FT and LFY. The protein is Agamous-like MADS-box protein AGL12 of Arabidopsis thaliana (Mouse-ear cress).